Reading from the N-terminus, the 633-residue chain is Dynein axonemal assembly factor 1 (633 aa).

A disordered region spans residues M1–P80. Residues A22 to E42 are compositionally biased toward basic and acidic residues. Positions G46–G60 are enriched in low complexity. Residues H70–P80 show a composition bias toward basic and acidic residues. LRR repeat units lie at residues A101–T123, G124–S145, E146–Q167, K168–P189, V190–R211, and Q215–E236. The region spanning N249–W288 is the LRRCT domain. Over residues E326–K344 the composition is skewed to basic and acidic residues. Disordered regions lie at residues E326–K364 and L404–D436. Residue S349 is modified to Phosphoserine. The segment covering A352–K364 has biased composition (basic and acidic residues). Positions T413–E427 are enriched in low complexity. T462 bears the Phosphothreonine mark. S465 and S488 each carry phosphoserine. Polar residues-rich tracts occupy residues T538 to P555 and G568 to G592. A disordered region spans residues T538–D633.

The protein belongs to the DNAAF1 family.

Its subcellular location is the cell projection. It localises to the cilium. Its function is as follows. Cilium-specific protein required for the stability of the ciliary architecture. Plays a role in cytoplasmic preassembly of dynein arms. Involved in regulation of microtubule-based cilia and actin-based brush border microvilli. The protein is Dynein axonemal assembly factor 1 (Dnaaf1) of Rattus norvegicus (Rat).